Consider the following 225-residue polypeptide: Venom allergen 5 (225 aa).

The N-terminal stretch at 1 to 23 (MKISGFVYLILITTIINLSFSEA) is a signal peptide. Cystine bridges form between C27–C39, C31–C124, C49–C117, and C191–C208. The SCP domain maps to 69–210 (KQHNEFRQKV…WHRHYLVCNY (142 aa)).

It belongs to the CRISP family. Venom allergen 5-like subfamily. Expressed by the venom gland.

It is found in the secreted. The sequence is that of Venom allergen 5 from Vespa magnifica (Hornet).